Here is a 419-residue protein sequence, read N- to C-terminus: Enolase (419 aa).

Gln-161 is a binding site for (2R)-2-phosphoglycerate. Residue Glu-205 is the Proton donor of the active site. Mg(2+) is bound by residues Asp-240, Glu-283, and Asp-309. Residues Lys-334, Arg-363, Ser-364, and Lys-385 each contribute to the (2R)-2-phosphoglycerate site. Lys-334 (proton acceptor) is an active-site residue.

It belongs to the enolase family. It depends on Mg(2+) as a cofactor.

It is found in the cytoplasm. It localises to the secreted. The protein localises to the cell surface. The catalysed reaction is (2R)-2-phosphoglycerate = phosphoenolpyruvate + H2O. Its pathway is carbohydrate degradation; glycolysis; pyruvate from D-glyceraldehyde 3-phosphate: step 4/5. In terms of biological role, catalyzes the reversible conversion of 2-phosphoglycerate (2-PG) into phosphoenolpyruvate (PEP). It is essential for the degradation of carbohydrates via glycolysis. This Saccharolobus islandicus (strain Y.N.15.51 / Yellowstone #2) (Sulfolobus islandicus) protein is Enolase.